Reading from the N-terminus, the 273-residue chain is Rho GTPase-activating protein gacB (273 aa).

A Rho-GAP domain is found at 1–192 (MTDQTLRLEN…YLISHFNEIF (192 aa)).

It localises to the cytoplasm. Functionally, rho GTPase-activating protein involved in the signal transduction pathway. This Dictyostelium discoideum (Social amoeba) protein is Rho GTPase-activating protein gacB (gacB).